A 557-amino-acid polypeptide reads, in one-letter code: CTP synthase (557 aa).

Residues 1–267 (MAKFVFVTGG…CREVLDVLDL (267 aa)) form an amidoligase domain region. Residue Ser13 participates in CTP binding. Ser13 contacts UTP. Residues 14–19 (SIGKGI) and Asp71 each bind ATP. 2 residues coordinate Mg(2+): Asp71 and Glu141. CTP is bound by residues 148–150 (DIE), 188–193 (KTKPTQ), and Lys224. Residues 188 to 193 (KTKPTQ) and Lys224 contribute to the UTP site. The Glutamine amidotransferase type-1 domain maps to 292–534 (KVALVGKYVQ…IEAAQQRLPC (243 aa)). Gly354 is an L-glutamine binding site. Cys381 functions as the Nucleophile; for glutamine hydrolysis in the catalytic mechanism. L-glutamine is bound by residues 382-385 (LGMQ), Glu405, and Arg462. Active-site residues include His507 and Glu509. Positions 532-557 (LPCSPSEAMRQQNNSAAGSSHPSLQP) are disordered. The segment covering 540-557 (MRQQNNSAAGSSHPSLQP) has biased composition (polar residues).

It belongs to the CTP synthase family. Homotetramer.

The catalysed reaction is UTP + L-glutamine + ATP + H2O = CTP + L-glutamate + ADP + phosphate + 2 H(+). It catalyses the reaction L-glutamine + H2O = L-glutamate + NH4(+). It carries out the reaction UTP + NH4(+) + ATP = CTP + ADP + phosphate + 2 H(+). The protein operates within pyrimidine metabolism; CTP biosynthesis via de novo pathway; CTP from UDP: step 2/2. Its activity is regulated as follows. Allosterically activated by GTP, when glutamine is the substrate; GTP has no effect on the reaction when ammonia is the substrate. The allosteric effector GTP functions by stabilizing the protein conformation that binds the tetrahedral intermediate(s) formed during glutamine hydrolysis. Inhibited by the product CTP, via allosteric rather than competitive inhibition. In terms of biological role, catalyzes the ATP-dependent amination of UTP to CTP with either L-glutamine or ammonia as the source of nitrogen. Regulates intracellular CTP levels through interactions with the four ribonucleotide triphosphates. This chain is CTP synthase, found in Synechococcus sp. (strain CC9311).